The chain runs to 270 residues: Formamidopyrimidine-DNA glycosylase (270 aa).

The active-site Schiff-base intermediate with DNA is Pro2. Glu3 (proton donor) is an active-site residue. Catalysis depends on Lys58, which acts as the Proton donor; for beta-elimination activity. Residues His91, Arg110, and Arg151 each contribute to the DNA site. Residues Phe236–Arg270 form an FPG-type zinc finger. Catalysis depends on Arg260, which acts as the Proton donor; for delta-elimination activity.

The protein belongs to the FPG family. As to quaternary structure, monomer. It depends on Zn(2+) as a cofactor.

It carries out the reaction Hydrolysis of DNA containing ring-opened 7-methylguanine residues, releasing 2,6-diamino-4-hydroxy-5-(N-methyl)formamidopyrimidine.. The enzyme catalyses 2'-deoxyribonucleotide-(2'-deoxyribose 5'-phosphate)-2'-deoxyribonucleotide-DNA = a 3'-end 2'-deoxyribonucleotide-(2,3-dehydro-2,3-deoxyribose 5'-phosphate)-DNA + a 5'-end 5'-phospho-2'-deoxyribonucleoside-DNA + H(+). In terms of biological role, involved in base excision repair of DNA damaged by oxidation or by mutagenic agents. Acts as a DNA glycosylase that recognizes and removes damaged bases. Has a preference for oxidized purines, such as 7,8-dihydro-8-oxoguanine (8-oxoG). Has AP (apurinic/apyrimidinic) lyase activity and introduces nicks in the DNA strand. Cleaves the DNA backbone by beta-delta elimination to generate a single-strand break at the site of the removed base with both 3'- and 5'-phosphates. The chain is Formamidopyrimidine-DNA glycosylase from Pseudomonas entomophila (strain L48).